Consider the following 332-residue polypeptide: tRNA(Ile)-lysidine synthase (332 aa).

39–44 (SGGADS) lines the ATP pocket.

This sequence belongs to the tRNA(Ile)-lysidine synthase family.

It is found in the cytoplasm. It catalyses the reaction cytidine(34) in tRNA(Ile2) + L-lysine + ATP = lysidine(34) in tRNA(Ile2) + AMP + diphosphate + H(+). Ligates lysine onto the cytidine present at position 34 of the AUA codon-specific tRNA(Ile) that contains the anticodon CAU, in an ATP-dependent manner. Cytidine is converted to lysidine, thus changing the amino acid specificity of the tRNA from methionine to isoleucine. The protein is tRNA(Ile)-lysidine synthase of Leifsonia xyli subsp. xyli (strain CTCB07).